We begin with the raw amino-acid sequence, 659 residues long: Cytochrome bo(3) ubiquinol oxidase subunit 1 (659 aa).

The Extracellular segment spans residues 1–14 (MFGKLSLNSIPYHD). The chain crosses the membrane as a helical span at residues 15–35 (PIIMITCCVVILVFLVISIII). At 36 to 56 (TIAQKWQYLWNEWCCTVDHKK) the chain is on the cytoplasmic side. The helical transmembrane segment at 57–77 (IAKMYIFLAFIMLFRGFADAI) threads the bilayer. Positions 71, 75, and 101 each coordinate a ubiquinone. Over 78-109 (MMRMQQFLVSSYHGNGTGFLPPHHYDQIFTAH) the chain is Extracellular. His109 contributes to the heme b binding site. A helical transmembrane segment spans residues 110–130 (GVIMIFFVAMPLVIGLMNFVV). Topologically, residues 131–148 (PLQIGSRDVAFPFLNNLS) are cytoplasmic. Residues 149–169 (LWLTIFSALLMNVSLGIGEFA) form a helical membrane-spanning segment. The Extracellular portion of the chain corresponds to 170–192 (QTGWLAYPPLSELQYSPGVGVDY). Residue Trp173 participates in heme b binding. A helical transmembrane segment spans residues 193–213 (WIWSLQISGIGTTLTAINFLV). The Cytoplasmic segment spans residues 214–235 (TIIKMRSSGMNWFKIPVFTWTS). A helical transmembrane segment spans residues 236–256 (FCTNILIIASFPVLTVSLLLL). Residues 257–280 (TLDRYLGFHFFTNDFGGNMMMYVN) are Extracellular-facing. Residues 281-301 (LIWIWGHPEVYILILPVFGIF) form a helical membrane-spanning segment. Residue His287 participates in Cu(2+) binding. The segment at residues 287-291 (HPEVY) is a cross-link (1'-histidyl-3'-tyrosine (His-Tyr)). Tyr291 provides a ligand contact to Fe(II)-heme o. Residues 302 to 318 (SEVVATFSSKELFGYTS) are Cytoplasmic-facing. Residues 319 to 339 (LIWATIVITILSFIVWLHHFF) form a helical membrane-spanning segment. Cu(2+)-binding residues include His336 and His337. Residues 340–350 (TMGASANVNAF) lie on the Extracellular side of the membrane. A helical transmembrane segment spans residues 351-371 (FGITTMIISIPTGVKIFNWLF). The Cytoplasmic portion of the chain corresponds to 372–382 (TMYRGNVRINS). A helical membrane pass occupies residues 383–403 (IMLWTIGFLITFSIGGMAGVL). The Extracellular portion of the chain corresponds to 404–416 (LSLPVIDFSLHNS). His414 and His422 together coordinate Fe(II)-heme o. Residues 417-437 (LFLVAHFHNVIIGGVVFGCFA) form a helical membrane-spanning segment. A heme b-binding site is contributed by His424. Residues 438–459 (GITYWFPKLFGFMLSEKWGKRA) are Cytoplasmic-facing. The chain crosses the membrane as a helical span at residues 460 to 480 (FWCWFFGFFCAFMPLYALGLM). Topologically, residues 481–499 (GMTRRLSQNINPQFHSMLT) are extracellular. Arg484 and Arg485 together coordinate heme b. Residues 500–520 (IAALGTILIFIGIVFQIIQIF) form a helical membrane-spanning segment. Residues 521–587 (VSIRDRNLNR…KLPILYTSFH (67 aa)) are Cytoplasmic-facing. The chain crosses the membrane as a helical span at residues 588–608 (MPKNTKFGFLIGFFAFLLGFS). A topological domain (extracellular) is located at residue Ala609. A helical transmembrane segment spans residues 610–630 (VWYIFWLFFISFFVIIYLLVI). The Cytoplasmic portion of the chain corresponds to 631 to 659 (KSLDTNCDYIISIEEIKEIEKCINIKKMD).

The protein belongs to the heme-copper respiratory oxidase family. In terms of assembly, the cytochrome bo(3) ubiquinol oxidase complex is a heterooctamer of two A chains, two B chains, two C chains and two D chains. It depends on Cu(2+) as a cofactor. Heme b is required as a cofactor. Fe(II)-heme o serves as cofactor.

It is found in the cell membrane. It catalyses the reaction 2 a ubiquinol + O2 + n H(+)(in) = 2 a ubiquinone + 2 H2O + n H(+)(out). Its function is as follows. Cytochrome bo(3) ubiquinol oxidase is the terminal enzyme in the aerobic respiratory chain. Catalyzes the four-electron reduction of O2 to water, using a ubiquinol as a membrane soluble electron donor for molecular oxygen reduction. Has proton pump activity across the membrane in addition to electron transfer, pumping 2 protons/electron and generating a proton motive force. All the redox centers of this enzyme complex are located within the largest subunit, subunit I. Protons are probably pumped via D- and K- channels found in this subunit. The protein is Cytochrome bo(3) ubiquinol oxidase subunit 1 (cyoB) of Buchnera aphidicola subsp. Baizongia pistaciae (strain Bp).